Reading from the N-terminus, the 524-residue chain is Apoptosis inhibitor 5-A (524 aa).

The tract at residues 1–360 (MATVEELYRS…HQLGRKLPDF (360 aa)) is ARM-like and Heat-like helical repeats. Residues 440–524 (TLSWKPVQRT…RGNRSRGRIY (85 aa)) form a disordered region. A Nuclear localization signal motif is present at residues 455–476 (KRTSDETSSTSPPKKPIVGPKR). The segment covering 503-516 (GFQGGRGRGWGGRG) has biased composition (gly residues).

This sequence belongs to the API5 family. Monomer.

Its subcellular location is the nucleus. Functionally, may be an antiapoptotic factor. This is Apoptosis inhibitor 5-A (api5-a) from Xenopus laevis (African clawed frog).